The primary structure comprises 927 residues: Solute carrier family 12 protein B0303.11 (927 aa).

Residues 1 to 23 are Cytoplasmic-facing; it reads MPSSTASSEDAPITSTAWMNWKD. The helical transmembrane segment at 24-44 threads the bilayer; it reads VFLKCVQPMLAVVLLLRFSSI. Residues 45–53 are Extracellular-facing; the sequence is VDEAGFTTT. The helical transmembrane segment at 54–74 threads the bilayer; the sequence is IILVFFTFLVSLVTGWSACTV. The Cytoplasmic portion of the chain corresponds to 75-95; the sequence is VSRKSSEVGFVKTMLAYSSTE. A helical membrane pass occupies residues 96 to 116; the sequence is FAISFSIIYLFCLLVATSTFL. The Extracellular portion of the chain corresponds to 117–141; that stretch reads TSAAEAVLHIFSTFSLELLDGATHD. The helical transmembrane segment at 142–159 threads the bilayer; that stretch reads LRLVSSVLSLITLALCMV. Over 160 to 165 the chain is Cytoplasmic; the sequence is RNRNAR. The chain crosses the membrane as a helical span at residues 166-186; that stretch reads FVRTFIFALTCIAIALQLSSV. Over 187–212 the chain is Extracellular; that stretch reads MFRYGEYQLRRVSDRNAMIPSPPNEE. A helical membrane pass occupies residues 213–233; that stretch reads ISTIFAQLFPAAMCGLTILNI. At 234–244 the chain is on the cytoplasmic side; that stretch reads GSKLQNTAPRG. The helical transmembrane segment at 245–265 threads the bilayer; it reads ALIAIAVSACFYGAAAMLDYV. The Extracellular segment spans residues 266-284; sequence EFFARTSTSNSTGSAEYNE. N-linked (GlcNAc...) asparagine glycosylation occurs at Asn275. Residues 285–305 traverse the membrane as a helical segment; sequence FLSYIYTTVPMAIVITLACVL. At 306 to 345 the chain is on the cytoplasmic side; that stretch reads SAVSTLKYAAVILQSLGRSNQCRCILWLAKGFGERDIPIR. A helical transmembrane segment spans residues 346-366; the sequence is CLLLLSTVQILVSAIGSYDIL. Cys367 is a topological domain (extracellular). The helical transmembrane segment at 368 to 388 threads the bilayer; that stretch reads IPTTVFYLFAYALFNFYVFLV. At 389-394 the chain is on the cytoplasmic side; sequence KLSDPE. The helical transmembrane segment at 395 to 415 threads the bilayer; the sequence is IPSPPTLLSLAISAACFIASL. Residues 416–419 lie on the Extracellular side of the membrane; it reads YTNR. The helical transmembrane segment at 420–440 threads the bilayer; that stretch reads HLALFIASIFAISYCSLLYII. Residues 441–927 are Cytoplasmic-facing; sequence RRERNEDGEE…SMSALRLKFP (487 aa).

Belongs to the SLC12A transporter family.

The protein localises to the cell membrane. This chain is Solute carrier family 12 protein B0303.11, found in Caenorhabditis elegans.